A 183-amino-acid chain; its full sequence is Heavy metal-associated isoprenylated plant protein 44 (183 aa).

The HMA domain occupies 50–113; the sequence is LQTVELKVRM…AVRRAGKRAE (64 aa). 2 residues coordinate a metal cation: Cys61 and Cys64. Position 180 is a cysteine methyl ester (Cys180). A lipid anchor (S-farnesyl cysteine) is attached at Cys180. Positions 181–183 are cleaved as a propeptide — removed in mature form; the sequence is RLM.

It belongs to the HIPP family.

In terms of biological role, heavy-metal-binding protein. This chain is Heavy metal-associated isoprenylated plant protein 44, found in Arabidopsis thaliana (Mouse-ear cress).